We begin with the raw amino-acid sequence, 119 residues long: uncharacterized protein (119 aa).

2 helical membrane passes run 7–27 and 32–52; these read ILHNALYYVLIIIYEYVLLLV and YFFEFLFLFLPLWLVFFFLML.

It localises to the membrane. This is an uncharacterized protein from Saccharomyces cerevisiae (strain ATCC 204508 / S288c) (Baker's yeast).